We begin with the raw amino-acid sequence, 190 residues long: Large ribosomal subunit protein uL6A (190 aa).

The protein belongs to the universal ribosomal protein uL6 family. In terms of assembly, component of the large ribosomal subunit (LSU). Mature yeast ribosomes consist of a small (40S) and a large (60S) subunit. The 40S small subunit contains 1 molecule of ribosomal RNA (18S rRNA) and at least 33 different proteins. The large 60S subunit contains 3 rRNA molecules (25S, 5.8S and 5S rRNA) and at least 46 different proteins. uL6 lines the binding pocket for eukaryotic elongation factor 2 (eEF2).

It localises to the cytoplasm. The protein localises to the nucleus. Its function is as follows. Component of the ribosome, a large ribonucleoprotein complex responsible for the synthesis of proteins in the cell. The small ribosomal subunit (SSU) binds messenger RNAs (mRNAs) and translates the encoded message by selecting cognate aminoacyl-transfer RNA (tRNA) molecules. The large subunit (LSU) contains the ribosomal catalytic site termed the peptidyl transferase center (PTC), which catalyzes the formation of peptide bonds, thereby polymerizing the amino acids delivered by tRNAs into a polypeptide chain. The nascent polypeptides leave the ribosome through a tunnel in the LSU and interact with protein factors that function in enzymatic processing, targeting, and the membrane insertion of nascent chains at the exit of the ribosomal tunnel. In Schizosaccharomyces pombe (strain 972 / ATCC 24843) (Fission yeast), this protein is Large ribosomal subunit protein uL6A (rpl901).